The primary structure comprises 209 residues: MLVWEELREKALNKIYHDKEIGYLDPDILGFLLAFYRNRNDVYTQSSCSGRITIVDAEMPWDRKNSTIIFKNHLRITEQDLEDVLSKNQVRRLWLIVQGPIIHIYAKNIETGWDILKIAREAGFKHSGILATNQKGVLVELRTGIRMVHLLRESNTERVDKDKIKTLVNVCNEVLARGKQKMNLLKDLLSSSSNNSMELGKNSKLKTPI.

The protein belongs to the TYW3 family.

It carries out the reaction 4-demethyl-7-[(3S)-3-amino-3-carboxypropyl]wyosine(37) in tRNA(Phe) + S-adenosyl-L-methionine = 7-[(3S)-3-amino-3-carboxypropyl]wyosine(37) in tRNA(Phe) + S-adenosyl-L-homocysteine + H(+). S-adenosyl-L-methionine-dependent methyltransferase that acts as a component of the wyosine derivatives biosynthesis pathway. Probably methylates N-4 position of wybutosine-86 to produce wybutosine-72. This is tRNA(Phe) 7-((3-amino-3-carboxypropyl)-4-demethylwyosine(37)-N(4))-methyltransferase from Saccharolobus solfataricus (strain ATCC 35092 / DSM 1617 / JCM 11322 / P2) (Sulfolobus solfataricus).